Consider the following 124-residue polypeptide: Prefoldin subunit beta (124 aa).

Belongs to the prefoldin subunit beta family. As to quaternary structure, heterohexamer of two alpha and four beta subunits.

Its subcellular location is the cytoplasm. Functionally, molecular chaperone capable of stabilizing a range of proteins. Seems to fulfill an ATP-independent, HSP70-like function in archaeal de novo protein folding. In Thermoplasma volcanium (strain ATCC 51530 / DSM 4299 / JCM 9571 / NBRC 15438 / GSS1), this protein is Prefoldin subunit beta (pfdB).